Reading from the N-terminus, the 480-residue chain is Lysostaphin (480 aa).

Residues 1–23 (MKKTKNNYYTTPLAIGLSTFALA) form the signal peptide. A propeptide spanning residues 24 to 234 (SIVYGGIQNE…ALVQNRTALR (211 aa)) is cleaved from the precursor. A run of 13 repeats spans residues 49–61 (AEVETSKPPVENT), 62–74 (AEVETSKAPVENT), 75–87 (AEVETSKAPVENT), 88–100 (AEVETSKAPVENT), 101–113 (AEVETSKAPVENT), 114–126 (AEVETSKAPVENT), 127–139 (AEVETSKAPVENT), 140–152 (AEVETSKAPVENT), 153–165 (AEVETSKAPVENT), 166–178 (AEVETSKAPVENT), 179–191 (AEVETSKAPVENT), 192–204 (AEVETSKAPVENT), and 205–217 (AEVETSKAPVENT). The 14 X 13 AA tandem repeats of A-E-V-E-T-S-K-[AP]-P-V-E-N-T stretch occupies residues 49-230 (AEVETSKPPV…ETSKALVQNR (182 aa)). Positions 51–219 (VETSKPPVEN…SKAPVENTAE (169 aa)) are disordered. The 14; approximate repeat unit spans residues 218 to 230 (AEVETSKALVQNR). Positions 266 and 270 each coordinate Zn(2+). His347 is an active-site residue. Position 349 (His349) interacts with Zn(2+). The SH3b domain maps to 400–468 (SESASFTPNT…YLPVRTWNKS (69 aa)).

The protein belongs to the peptidase M23B family. As to quaternary structure, monomer. Zn(2+) serves as cofactor.

The protein resides in the secreted. It carries out the reaction Hydrolysis of the -Gly-|-Gly- bond in the pentaglycine inter-peptide link joining staphylococcal cell wall peptidoglycans.. Its function is as follows. Lyses staphylococcal cells by hydrolyzing the polyglycine interpeptide bridges of the peptidoglycan. This chain is Lysostaphin (lss), found in Staphylococcus staphylolyticus.